Consider the following 81-residue polypeptide: Photosystem I iron-sulfur center (81 aa).

2 consecutive 4Fe-4S ferredoxin-type domains span residues 2–31 (SHSV…MIPW) and 39–68 (IASA…VRVY). [4Fe-4S] cluster is bound by residues Cys-11, Cys-14, Cys-17, Cys-21, Cys-48, Cys-51, Cys-54, and Cys-58.

As to quaternary structure, the eukaryotic PSI reaction center is composed of at least 11 subunits. The cofactor is [4Fe-4S] cluster.

The protein resides in the plastid. It localises to the chloroplast thylakoid membrane. It catalyses the reaction reduced [plastocyanin] + hnu + oxidized [2Fe-2S]-[ferredoxin] = oxidized [plastocyanin] + reduced [2Fe-2S]-[ferredoxin]. Apoprotein for the two 4Fe-4S centers FA and FB of photosystem I (PSI); essential for photochemical activity. FB is the terminal electron acceptor of PSI, donating electrons to ferredoxin. The C-terminus interacts with PsaA/B/D and helps assemble the protein into the PSI complex. Required for binding of PsaD and PsaE to PSI. PSI is a plastocyanin-ferredoxin oxidoreductase, converting photonic excitation into a charge separation, which transfers an electron from the donor P700 chlorophyll pair to the spectroscopically characterized acceptors A0, A1, FX, FA and FB in turn. In Arabis hirsuta (Hairy rock-cress), this protein is Photosystem I iron-sulfur center.